The primary structure comprises 308 residues: Uricase (308 aa).

Catalysis depends on charge relay system residues Lys-5 and Thr-65. Residues Thr-65, Asp-66, Phe-177, Arg-194, Ile-242, Gln-243, and Asn-269 each coordinate urate. A disordered region spans residues 283 to 308; the sequence is ASVLREPPAPTGFQQFSMDRGDLDEQ.

It belongs to the uricase family.

The catalysed reaction is urate + O2 + H2O = 5-hydroxyisourate + H2O2. It participates in purine metabolism; urate degradation; (S)-allantoin from urate: step 1/3. Its function is as follows. Catalyzes the oxidation of uric acid to 5-hydroxyisourate, which is further processed to form (S)-allantoin. The polypeptide is Uricase (Haloferax volcanii (strain ATCC 29605 / DSM 3757 / JCM 8879 / NBRC 14742 / NCIMB 2012 / VKM B-1768 / DS2) (Halobacterium volcanii)).